A 211-amino-acid chain; its full sequence is ATP phosphoribosyltransferase (211 aa).

This sequence belongs to the ATP phosphoribosyltransferase family. Short subfamily. In terms of assembly, heteromultimer composed of HisG and HisZ subunits.

It localises to the cytoplasm. The catalysed reaction is 1-(5-phospho-beta-D-ribosyl)-ATP + diphosphate = 5-phospho-alpha-D-ribose 1-diphosphate + ATP. Its pathway is amino-acid biosynthesis; L-histidine biosynthesis; L-histidine from 5-phospho-alpha-D-ribose 1-diphosphate: step 1/9. Its function is as follows. Catalyzes the condensation of ATP and 5-phosphoribose 1-diphosphate to form N'-(5'-phosphoribosyl)-ATP (PR-ATP). Has a crucial role in the pathway because the rate of histidine biosynthesis seems to be controlled primarily by regulation of HisG enzymatic activity. This is ATP phosphoribosyltransferase from Ectopseudomonas mendocina (strain ymp) (Pseudomonas mendocina).